A 325-amino-acid chain; its full sequence is mRNA decay activator protein ZFP36 (325 aa).

The tract at residues 1-15 (MDLAAIYKSLLSLSP) is necessary for nuclear export. The tract at residues 1 to 98 (MDLAAIYKSL…PTSPTATPTT (98 aa)) is necessary and sufficient for the association with mRNA decay enzymes and mRNA decay activation. Necessary for localization of ARE-containing mRNAs to processing bodies (PBs) stretches follow at residues 1–172 (MDLA…DLAA) and 98–325 (TSSR…SVSE). Positions 15 to 48 (PELPSDLGETESSTSWASSGPWSLSSSDSSLPEA) are enriched in low complexity. The interval 15 to 101 (PELPSDLGET…PTATPTTSSR (87 aa)) is disordered. At Ser-58 the chain carries Phosphoserine; by MAPKAPK2. Position 64 is a phosphoserine (Ser-64). A P-P-P-P-G repeat occupies 69 to 73 (PPPPG). Residues 75–101 (APLAPRPSSELSPSPTSPTATPTTSSR) are compositionally biased toward low complexity. Ser-86 and Ser-88 each carry phosphoserine. Residue Thr-90 is modified to Phosphothreonine. Ser-91 is modified (phosphoserine). The necessary for nuclear localization stretch occupies residues 93-166 (TATPTTSSRY…GSRCHFIHNP (74 aa)). Residues 95 to 171 (TPTTSSRYKT…FIHNPSEDLA (77 aa)) are necessary for RNA-binding. 2 C3H1-type zinc fingers span residues 101 to 129 (RYKT…HGLG) and 139 to 167 (KYKT…HNPS). Positions 101–192 (RYKTELCRTF…ISFSGLPSGR (92 aa)) are necessary for interaction with PABPN1. Ser-167 is modified (phosphoserine). Positions 172-325 (APGHPHVLRQ…PIFNRISVSE (154 aa)) are necessary for mRNA decay activation. Ser-184 bears the Phosphoserine; by MAPKAPK2 mark. Disordered regions lie at residues 185–248 (FSGL…TPAC) and 260–325 (VWGP…SVSE). Ser-195 bears the Phosphoserine mark. The stretch at 196–200 (PPPAS) is one P-P-P-P-G repeat. Residues 204 to 214 (PSVPSWSFSPS) show a composition bias toward low complexity. At Ser-216 the chain carries Phosphoserine. A P-P-P-P-G repeat occupies 217–222 (PPPPPG). Ser-227 is subject to Phosphoserine; by MAPK1; in vitro. Residues Ser-275, Ser-295, and Ser-322 each carry the phosphoserine modification. Residues 285-295 (SSGSSLGGSDS) are compositionally biased toward low complexity. Residues 311–325 (APRRLPIFNRISVSE) form an interaction with CNOT1 region.

In terms of assembly, associates with cytoplasmic CCR4-NOT and PAN2-PAN3 deadenylase complexes to trigger ARE-containing mRNA deadenylation and decay processes. Part of a mRNA decay activation complex at least composed of poly(A)-specific exoribonucleases CNOT6, EXOSC2 and XRN1 and mRNA-decapping enzymes DCP1A and DCP2. Associates with the RNA exosome complex. Interacts (via phosphorylated form) with 14-3-3 proteins; these interactions promote exclusion of ZFP36 from cytoplasmic stress granules in response to arsenite treatment in a MAPKAPK2-dependent manner and does not prevent CCR4-NOT deadenylase complex recruitment or ZFP36-induced ARE-containing mRNA deadenylation and decay processes. Interacts with 14-3-3 proteins; these interactions occur in response to rapamycin in an Akt-dependent manner. Interacts with AGO2 and AGO4. Interacts (via C-terminus) with CNOT1; this interaction occurs in a RNA-independent manner and induces mRNA deadenylation. Interacts (via N-terminus) with CNOT6. Interacts with CNOT6L. Interacts (via C-terminus) with CNOT7; this interaction occurs in a RNA-independent manner, induces mRNA deadenylation and is inhibited in a phosphorylation MAPKAPK2-dependent manner. Interacts (via unphosphorylated form) with CNOT8; this interaction occurs in a RNA-independent manner and is inhibited in a phosphorylation MAPKAPK2-dependent manner. Interacts with DCP1A. Interacts (via N-terminus) with DCP2. Interacts with EDC3. Interacts (via N-terminus) with EXOSC2. Interacts with heat shock 70 kDa proteins. Interacts with KHSRP; this interaction increases upon cytokine-induced treatment. Interacts with MAP3K4; this interaction enhances the association with SH3KBP1/CIN85. Interacts with MAPKAPK2; this interaction occurs upon skeletal muscle satellite cell activation. Interacts with NCL. Interacts with NUP214; this interaction increases upon lipopolysaccharide (LPS) stimulation. Interacts with PABPC1; this interaction occurs in a RNA-dependent manner. Interacts (via hypophosphorylated form) with PABPN1 (via RRM domain and C-terminal arginine-rich region); this interaction occurs in the nucleus in a RNA-independent manner, decreases in presence of single-stranded poly(A) RNA-oligomer and in a p38 MAPK-dependent-manner and inhibits nuclear poly(A) tail synthesis. Interacts with PAN2. Interacts (via C3H1-type zinc finger domains) with PKM. Interacts (via C3H1-type zinc finger domains) with nuclear RNA poly(A) polymerase. Interacts with PPP2CA; this interaction occurs in LPS-stimulated cells and induces ZFP36 dephosphorylation, and hence may promote ARE-containing mRNAs decay. Interacts (via C-terminus) with PRR5L (via C-terminus); this interaction may accelerate ZFP36-mediated mRNA decay during stress. Interacts (via C-terminus) with SFN; this interaction occurs in a phosphorylation-dependent manner. Interacts (via extreme C-terminal region) with SH3KBP1/CIN85 (via SH3 domains); this interaction enhances MAP3K4-induced phosphorylation of ZFP36 at Ser-64 and Ser-91 and does not alter neither ZFP36 binding to ARE-containing transcripts nor TNF-alpha mRNA decay. Interacts with XRN1. Interacts (via C-terminus and Ser-184 phosphorylated form) with YWHAB; this interaction occurs in a p38/MAPKAPK2-dependent manner, increases cytoplasmic localization of ZFP36 and protects ZFP36 from Ser-184 dephosphorylation by serine/threonine phosphatase 2A, and hence may be crucial for stabilizing ARE-containing mRNAs. Interacts (via phosphorylated form) with YWHAE. Interacts (via C-terminus) with YWHAG; this interaction occurs in a phosphorylation-dependent manner. Interacts with YWHAH; this interaction occurs in a phosphorylation-dependent manner. Interacts with YWHAQ; this interaction occurs in a phosphorylation-dependent manner. Interacts with (via C-terminus) YWHAZ; this interaction occurs in a phosphorylation-dependent manner. Does not interact with SH3KBP1. Interacts (via P-P-P-P-G repeats) with GIGYF2; the interaction is direct. Phosphorylated. Phosphorylation at serine and/or threonine residues occurs in a p38 MAPK- and MAPKAPK2-dependent manner. Phosphorylated by MAPKAPK2 at Ser-58 and Ser-184; phosphorylation increases its stability and cytoplasmic localization, promotes binding to 14-3-3 adapter proteins and inhibits the recruitment of cytoplasmic CCR4-NOT and PAN2-PAN3 deadenylase complexes to the mRNA decay machinery, thereby inhibiting ZFP36-induced ARE-containing mRNA deadenylation and decay processes. Phosphorylation by MAPKAPK2 does not impair ARE-containing RNA-binding. Phosphorylated in a MAPKAPK2- and p38 MAPK-dependent manner upon skeletal muscle satellite cell activation; this phosphorylation inhibits ZFP36-mediated mRNA decay activity, and hence stabilizes MYOD1 mRNA. Phosphorylated by MAPK1 upon mitogen stimulation. Phosphorylated at Ser-64 and Ser-91; these phosphorylations increase in a SH3KBP1-dependent manner. Phosphorylated at serine and threonine residues in a pyruvate kinase PKM- and p38 MAPK-dependent manner. Phosphorylation at Ser-58 may participate in the PKM-mediated degradation of ZFP36 in a p38 MAPK-dependent manner. Dephosphorylated by serine/threonine phosphatase 2A at Ser-184. In terms of processing, ubiquitinated; pyruvate kinase (PKM)-dependent ubiquitination leads to proteasomal degradation through a p38 MAPK signaling pathway.

It localises to the nucleus. The protein localises to the cytoplasm. The protein resides in the cytoplasmic granule. It is found in the P-body. Its function is as follows. Zinc-finger RNA-binding protein that destabilizes numerous cytoplasmic AU-rich element (ARE)-containing mRNA transcripts by promoting their poly(A) tail removal or deadenylation, and hence provide a mechanism for attenuating protein synthesis. Acts as an 3'-untranslated region (UTR) ARE mRNA-binding adapter protein to communicate signaling events to the mRNA decay machinery. Recruits deadenylase CNOT7 (and probably the CCR4-NOT complex) via association with CNOT1, and hence promotes ARE-mediated mRNA deadenylation. Also functions by recruiting components of the cytoplasmic RNA decay machinery to the bound ARE-containing mRNAs. Self regulates by destabilizing its own mRNA. Binds to 3'-UTR ARE of numerous mRNAs. Also binds to ARE of its own mRNA. Plays a role in anti-inflammatory responses; suppresses tumor necrosis factor (TNF)-alpha production by stimulating ARE-mediated TNF-alpha mRNA decay and several other inflammatory ARE-containing mRNAs in interferon (IFN)- and/or lipopolysaccharide (LPS)-induced macrophages. Also plays a role in the regulation of dendritic cell maturation at the post-transcriptional level, and hence operates as part of a negative feedback loop to limit the inflammatory response. Promotes ARE-mediated mRNA decay of hypoxia-inducible factor HIF1A mRNA during the response of endothelial cells to hypoxia. Positively regulates early adipogenesis of preadipocytes by promoting ARE-mediated mRNA decay of immediate early genes (IEGs). Negatively regulates hematopoietic/erythroid cell differentiation by promoting ARE-mediated mRNA decay of the transcription factor STAT5B mRNA. Plays a role in maintaining skeletal muscle satellite cell quiescence by promoting ARE-mediated mRNA decay of the myogenic determination factor MYOD1 mRNA. Also associates with and regulates the expression of non-ARE-containing target mRNAs at the post-transcriptional level, such as MHC class I mRNAs. Participates in association with argonaute RISC catalytic components in the ARE-mediated mRNA decay mechanism; assists microRNA (miRNA) targeting ARE-containing mRNAs. May also play a role in the regulation of cytoplasmic mRNA decapping; enhances decapping of ARE-containing RNAs, in vitro. Involved in the delivery of target ARE-mRNAs to processing bodies (PBs). In addition to its cytosolic mRNA-decay function, affects nuclear pre-mRNA processing. Negatively regulates nuclear poly(A)-binding protein PABPN1-stimulated polyadenylation activity on ARE-containing pre-mRNA during LPS-stimulated macrophages. Also involved in the regulation of stress granule (SG) and P-body (PB) formation and fusion. Plays a role in the regulation of keratinocyte proliferation, differentiation and apoptosis. Plays a role as a tumor suppressor by inhibiting cell proliferation in breast cancer cells. The chain is mRNA decay activator protein ZFP36 from Ovis aries (Sheep).